A 905-amino-acid chain; its full sequence is Clumping factor B (905 aa).

Positions 1–44 (MKKRIDYLSNKQNKYSIRRFTVGTTSVIVGATILFGIGNHQAQA) are cleaved as a signal peptide. The short motif at 15-26 (YSIRRFTVGTTS) is the YSIRK-G/S signaling motif element. 2 stretches are compositionally biased toward polar residues: residues 44–61 (ASEQ…NASA) and 68–101 (MIET…KPMS). The tract at residues 44-191 (ASEQSNDTTQ…AQGTSKPSVR (148 aa)) is disordered. The ligand binding A region stretch occupies residues 45–542 (SEQSNDTTQS…GSADGDSAVN (498 aa)). The span at 102 to 119 (TQTSNTTTTEPASTNETP) shows a compositional bias: low complexity. A compositionally biased stretch (polar residues) spans 134 to 189 (QDQTVPQEANSQVDNKTTNDANSIATNSELKNPQTLDLPQSSPQTISNAQGTSKPS). The MIDAS-like motif signature appears at 272–276 (DYSNS). Positions 530–877 (YGGGSADGDS…ETGDKSENTN (348 aa)) are disordered. The segment covering 545–555 (DPTPGPPVDPE) has biased composition (pro residues). The span at 556–829 (PSPDPEPEPS…SDSDSDSDSD (274 aa)) shows a compositional bias: acidic residues. A compositionally biased stretch (polar residues) spans 833 to 844 (RVTPPNNEQKAP). Over residues 861-874 (HKTDALPETGDKSE) the composition is skewed to basic and acidic residues. The short motif at 866–870 (LPETG) is the LPXTG sorting signal element. Thr-869 is subject to Pentaglycyl murein peptidoglycan amidated threonine. Residues 870-905 (GDKSENTNATLFGAMMALLGSLLLFRKRKQDHKEKA) constitute a propeptide, removed by sortase.

The protein belongs to the serine-aspartate repeat-containing protein (SDr) family. Proteolytically cleaved by aureolysin (aur). This cleavage leads to the inactivation of ClfB.

Its subcellular location is the secreted. The protein localises to the cell wall. Cell surface-associated protein implicated in virulence by promoting bacterial attachment to both alpha- and beta-chains of human fibrinogen and inducing the formation of bacterial clumps. This is Clumping factor B (clfB) from Staphylococcus aureus (strain MSSA476).